Reading from the N-terminus, the 634-residue chain is Replication protein E1 (634 aa).

The Nuclear localization signal signature appears at 85-87 (KRK). Phosphoserine; by host occurs at positions 91 and 95. Residues 92-117 (PRSSPLGDITNQNNTHSHSQANESQV) are disordered. Residues 100–115 (ITNQNNTHSHSQANES) are compositionally biased toward polar residues. Residues 172–338 (CANVELNSIC…QTQLQHSFED (167 aa)) form a DNA-binding region region. The region spanning 437–587 (VNFMSFIQMF…FPFDNNGNAV (151 aa)) is the SF3 helicase domain. An ATP-binding site is contributed by 463–470 (GPPNTGKS).

The protein belongs to the papillomaviridae E1 protein family. Can form hexamers. Interacts with E2 protein; this interaction increases E1 DNA binding specificity. Interacts with host DNA polymerase subunit POLA2. Interacts with host single stranded DNA-binding protein RPA1. Interacts with host TOP1; this interaction stimulates the enzymatic activity of TOP1. In terms of processing, phosphorylated.

The protein resides in the host nucleus. It carries out the reaction Couples ATP hydrolysis with the unwinding of duplex DNA by translocating in the 3'-5' direction.. It catalyses the reaction ATP + H2O = ADP + phosphate + H(+). ATP-dependent DNA 3'-5' helicase required for initiation of viral DNA replication. It forms a complex with the viral E2 protein. The E1-E2 complex binds to the replication origin which contains binding sites for both proteins. During the initial step, a dimer of E1 interacts with a dimer of protein E2 leading to a complex that binds the viral origin of replication with high specificity. Then, a second dimer of E1 displaces the E2 dimer in an ATP-dependent manner to form the E1 tetramer. Following this, two E1 monomers are added to each half of the site, which results in the formation of two E1 trimers on the viral ori. Subsequently, two hexamers will be created. The double hexamer acts as a bi-directional helicase machinery and unwinds the viral DNA and then recruits the host DNA polymerase to start replication. This chain is Replication protein E1, found in Homo sapiens (Human).